Consider the following 346-residue polypeptide: Structure-specific endonuclease subunit SLX1 (346 aa).

The 84-residue stretch at 22 to 105 (DFYGVYLLRS…QHPYQTRHIK (84 aa)) folds into the GIY-YIG domain. The SLX1-type zinc-finger motif lies at 216-306 (CFICNETIDY…TPLQGKCLSC (91 aa)).

Belongs to the SLX1 family. In terms of assembly, forms a heterodimer with SLX4. Requires a divalent metal cation as cofactor.

It is found in the nucleus. Functionally, catalytic subunit of the SLX1-SLX4 structure-specific endonuclease that resolves DNA secondary structures generated during DNA repair and recombination. Has endonuclease activity towards branched DNA substrates, introducing single-strand cuts in duplex DNA close to junctions with ss-DNA. The chain is Structure-specific endonuclease subunit SLX1 from Debaryomyces hansenii (strain ATCC 36239 / CBS 767 / BCRC 21394 / JCM 1990 / NBRC 0083 / IGC 2968) (Yeast).